A 139-amino-acid chain; its full sequence is Invertebrate-type lysozyme 2 (139 aa).

Positions 1–18 (MFVKAILLLSIAVAYASA) are cleaved as a signal peptide. The I-type lysozyme domain occupies 19-138 (DCLHCICMRE…WKGVHSCCGC (120 aa)). 7 disulfide bridges follow: cysteine 20/cysteine 106, cysteine 23/cysteine 138, cysteine 25/cysteine 31, cysteine 36/cysteine 45, cysteine 58/cysteine 86, cysteine 76/cysteine 82, and cysteine 98/cysteine 120. The active-site Proton donor is the glutamate 28. Aspartate 39 acts as the Nucleophile in catalysis. 51-57 (KIPYYED) provides a ligand contact to substrate. Residues tyrosine 90 and 113–115 (HNG) contribute to the substrate site.

This sequence belongs to the glycosyl hydrolase 22 family. Type-I lysozyme subfamily. As to expression, expressed in pharyngeal muscle cell pm3, nerve ring and intestine.

The catalysed reaction is Hydrolysis of (1-&gt;4)-beta-linkages between N-acetylmuramic acid and N-acetyl-D-glucosamine residues in a peptidoglycan and between N-acetyl-D-glucosamine residues in chitodextrins.. In terms of biological role, has bacteriolytic activity against Gram-positive bacteria. May play a role in resistance to Gram-positive bacterium S.aureus infection. The sequence is that of Invertebrate-type lysozyme 2 from Caenorhabditis elegans.